The following is a 446-amino-acid chain: Movement protein TGB1 (446 aa).

Residues 40–60 (NKLDKRLQNTRKKNKNKEKTR) form a disordered region. The 144-residue stretch at 160–303 (KACCKKERNQ…WLHVPIVFSS (144 aa)) folds into the (+)RNA virus helicase ATP-binding domain. 193-200 (GVPGSGKS) provides a ligand contact to ATP. The (+)RNA virus helicase C-terminal domain maps to 304 to 444 (DSSHRFGPET…CYGEEHRPDE (141 aa)).

It belongs to the virgaviridae/benyvirus TGB1 movement protein family. As to quaternary structure, homooligomer. Interacts with movement protein TGB3. TGB1-TGB3-TGB2 complex formation is enhanced by ATP hydrolysis. Interacts with the suppressor of RNA silencing (via N-terminus). Mg(2+) serves as cofactor.

It is found in the host cell junction. The protein resides in the host plasmodesma. It localises to the host nucleus. The protein localises to the host cytoplasm. Its subcellular location is the host nucleolus. It is found in the host cytoskeleton. The enzyme catalyses ATP + H2O = ADP + phosphate + H(+). Its function is as follows. Participates in the transport of viral genome to neighboring plant cells directly through plasmodesmata, without any budding. Multifunctional movement protein with RNA-binding, ATPase and helicase activities. Engages in homologous interactions leading to the formation of a ribonucleoprotein complex containing plus-sense viral RNAs (vRNPs). ATPase activity is probably required for vRNPs movement complex assembly. Intracellular delivery of TGBp1-containing vRNPs to plasmodesmata is facilitated by TGBp2 and TGBp3. This Arachis hypogaea (Peanut) protein is Movement protein TGB1.